Consider the following 654-residue polypeptide: Arrestin domain-containing protein C (654 aa).

The C2 domain maps to 1–105 (MTQRSLKINI…AKRNLMDQWL (105 aa)). Positions 616-647 (AKRIFLKIQQIQSERQKQQEQQEQQVVSNLEA) form a coiled coil.

Belongs to the arrestin family.

The protein is Arrestin domain-containing protein C (adcC) of Dictyostelium discoideum (Social amoeba).